A 554-amino-acid chain; its full sequence is Urocanate hydratase (554 aa).

NAD(+) is bound by residues 51-52 (GG), Gln129, 175-177 (GMG), Glu195, 241-242 (NA), 262-266 (QTSAH), 272-273 (YL), and Tyr321. Cys409 is a catalytic residue. Gly491 contacts NAD(+).

This sequence belongs to the urocanase family. NAD(+) is required as a cofactor.

Its subcellular location is the cytoplasm. The catalysed reaction is 4-imidazolone-5-propanoate = trans-urocanate + H2O. The protein operates within amino-acid degradation; L-histidine degradation into L-glutamate; N-formimidoyl-L-glutamate from L-histidine: step 2/3. Its function is as follows. Catalyzes the conversion of urocanate to 4-imidazolone-5-propionate. This Methylobacterium nodulans (strain LMG 21967 / CNCM I-2342 / ORS 2060) protein is Urocanate hydratase.